We begin with the raw amino-acid sequence, 99 residues long: Leydig cell tumor 10 kDa protein homolog (99 aa).

The segment at 1–36 (MAQGQRKFQAHKPAKSKTAAAASEKNRGPRKGGRVI) is disordered.

This sequence belongs to the UPF0390 family.

Functionally, may have a potential role in hypercalcemia of malignancy. The chain is Leydig cell tumor 10 kDa protein homolog (C19orf53) from Homo sapiens (Human).